We begin with the raw amino-acid sequence, 111 residues long: Phosphoribosyl-ATP pyrophosphatase (111 aa).

The protein belongs to the PRA-PH family.

It localises to the cytoplasm. The enzyme catalyses 1-(5-phospho-beta-D-ribosyl)-ATP + H2O = 1-(5-phospho-beta-D-ribosyl)-5'-AMP + diphosphate + H(+). It participates in amino-acid biosynthesis; L-histidine biosynthesis; L-histidine from 5-phospho-alpha-D-ribose 1-diphosphate: step 2/9. The sequence is that of Phosphoribosyl-ATP pyrophosphatase from Pseudomonas entomophila (strain L48).